The chain runs to 365 residues: Probable dual-specificity RNA methyltransferase RlmN (365 aa).

Catalysis depends on glutamate 108, which acts as the Proton acceptor. One can recognise a Radical SAM core domain in the interval 114–347 (HNYGNSVCVT…VTIRREHGHD (234 aa)). Cysteine 121 and cysteine 352 are joined by a disulfide. Residues cysteine 128, cysteine 132, and cysteine 135 each coordinate [4Fe-4S] cluster. S-adenosyl-L-methionine is bound by residues 178–179 (GE), serine 210, 233–235 (SLH), and asparagine 309. Residue cysteine 352 is the S-methylcysteine intermediate of the active site.

Belongs to the radical SAM superfamily. RlmN family. It depends on [4Fe-4S] cluster as a cofactor.

It localises to the cytoplasm. It carries out the reaction adenosine(2503) in 23S rRNA + 2 reduced [2Fe-2S]-[ferredoxin] + 2 S-adenosyl-L-methionine = 2-methyladenosine(2503) in 23S rRNA + 5'-deoxyadenosine + L-methionine + 2 oxidized [2Fe-2S]-[ferredoxin] + S-adenosyl-L-homocysteine. The catalysed reaction is adenosine(37) in tRNA + 2 reduced [2Fe-2S]-[ferredoxin] + 2 S-adenosyl-L-methionine = 2-methyladenosine(37) in tRNA + 5'-deoxyadenosine + L-methionine + 2 oxidized [2Fe-2S]-[ferredoxin] + S-adenosyl-L-homocysteine. In terms of biological role, specifically methylates position 2 of adenine 2503 in 23S rRNA and position 2 of adenine 37 in tRNAs. The polypeptide is Probable dual-specificity RNA methyltransferase RlmN (Geobacillus kaustophilus (strain HTA426)).